The sequence spans 5641 residues: Cyclochlorotine synthetase (5641 aa).

Residues 95 to 124 form a disordered region; it reads PENLNGHLIGSTNGHKKQWENDSADDKRGQ. A compositionally biased stretch (basic and acidic residues) spans 111 to 124; it reads KQWENDSADDKRGQ. The tract at residues 217–622 is adenylation (A) domain 1; it reads FTENVQRYPT…GRRDTQVKIR (406 aa). Positions 816–892 constitute a Carrier 1 domain; the sequence is TEEEYKIQTL…DLVSNCKMSA (77 aa). A thiolation (T) domain 1 region spans residues 821-889; the sequence is KIQTLKEIWS…QLSDLVSNCK (69 aa). S853 is modified (O-(pantetheine 4'-phosphoryl)serine). The segment at 926 to 1333 is condensation (C) domain 1; that stretch reads EDVYPCTPLQ…AHVAEQIGQP (408 aa). The interval 1390–1768 is adenylation (A) domain 2; the sequence is DGNLTFEELN…ISRATTQIKI (379 aa). One can recognise a Carrier 2 domain in the interval 1902 to 1978; the sequence is IELSEKQENM…QLVMIATELT (77 aa). Residues 1907-1975 are thiolation (T) domain 2; the sequence is KQENMARLWA…RFDQLVMIAT (69 aa). An O-(pantetheine 4'-phosphoryl)serine modification is found at S1939. Residues 2022–2438 form a condensation (C) domain 2 region; it reads DIYACTPFQE…DLASEQDLAK (417 aa). An adenylation (A) domain 3 region spans residues 2459-2859; it reads AEKARQHPNK…GRADTQVKLR (401 aa). Residues 2976 to 3052 enclose the Carrier 3 domain; that stretch reads GPLTEMETTL…GMAIKIQPIH (77 aa). Residues 2977 to 3049 form a thiolation (T) domain 3 region; it reads PLTEMETTLA…NLAGMAIKIQ (73 aa). O-(pantetheine 4'-phosphoryl)serine is present on S3013. The segment at 3089-3482 is condensation (C) domain 3; the sequence is DIYPCTPLQV…LETVLSAFST (394 aa). The adenylation (A) domain 4 stretch occupies residues 3523–3873; sequence VQRAPDKVAI…IARKDLQVKL (351 aa). Residues 4005-4081 form the Carrier 4 domain; sequence IPSTPTEMKM…ELATKIAPRI (77 aa). Residues 4010-4078 form a thiolation (T) domain 4 region; sequence TEMKMQQLWA…RLSELATKIA (69 aa). At S4042 the chain carries O-(pantetheine 4'-phosphoryl)serine. The condensation (C) domain 4 stretch occupies residues 4123 to 4549; it reads KDVYPCTPLQ…QSLDSLSQQD (427 aa). Residues 4574–4982 are adenylation (A) domain 5; sequence QEIAGRHPDA…GRIGTDIKLR (409 aa). Residues 5118-5194 enclose the Carrier 5 domain; that stretch reads PPSTQEEKVI…SLAEKISWES (77 aa). Residues 5123–5191 form a thiolation (T) domain 5 region; the sequence is EEKVIAALWA…KLASLAEKIS (69 aa). S5155 is modified (O-(pantetheine 4'-phosphoryl)serine). Residues 5260–5556 form a condensation (C) domain 5 region; that stretch reads AYLDIGPDVQ…DKCTTCVSGS (297 aa).

This sequence belongs to the NRP synthetase family.

It participates in mycotoxin biosynthesis. Nonribosomal peptide synthetase; part of the gene cluster that mediates the biosynthesis of the mycotoxin cyclochlorotine, a hepatotoxic and carcinogenic cyclic chlorinated pentapeptide. Within the pathway, The NRPS cctN initially catalyzes the condensation of L-serine (Ser), Pro, L-2-aminobutyrate (2Abu), Ser, and beta-Phe in this order. During the chain elongation, side-chain hydroxy group of Ser4 would be used as a nucleophile, giving isocyclotine as a product of terminal condensation-like (CT) domain-catalyzed cyclization. After the dichlorination of Pro2 catalyzed by cctP2 to produce isocyclochlorotine, the cctO-mediated transacylation of isocyclochlorotine can furnish cyclochlorotine. The subsequent hydroxylation of cyclochlorotine by cctR yields hydroxycyclochlorotine as the final product. CctP1 probably acts as a phenylalanine aminomutase and provides the uncommon building block beta-Phe. Furthermore, 2Abu can be synthesized from threonine by one of the threonine dehydratases and transaminases localized outside of the cluster. The functions of the remaining proteins encoded by the cluster, cctM and cctT, have not been identified yet. The polypeptide is Cyclochlorotine synthetase (Talaromyces islandicus (Penicillium islandicum)).